A 360-amino-acid chain; its full sequence is 3-isopropylmalate dehydrogenase (360 aa).

Gly76–Glu89 contacts NAD(+). Arg96, Arg106, Arg134, and Asp224 together coordinate substrate. Residues Asp224, Asp248, and Asp252 each contribute to the Mg(2+) site. Gly282–Asn294 is an NAD(+) binding site.

The protein belongs to the isocitrate and isopropylmalate dehydrogenases family. LeuB type 1 subfamily. As to quaternary structure, homodimer. It depends on Mg(2+) as a cofactor. The cofactor is Mn(2+).

Its subcellular location is the cytoplasm. It carries out the reaction (2R,3S)-3-isopropylmalate + NAD(+) = 4-methyl-2-oxopentanoate + CO2 + NADH. The protein operates within amino-acid biosynthesis; L-leucine biosynthesis; L-leucine from 3-methyl-2-oxobutanoate: step 3/4. Its function is as follows. Catalyzes the oxidation of 3-carboxy-2-hydroxy-4-methylpentanoate (3-isopropylmalate) to 3-carboxy-4-methyl-2-oxopentanoate. The product decarboxylates to 4-methyl-2 oxopentanoate. This Pseudomonas savastanoi pv. phaseolicola (strain 1448A / Race 6) (Pseudomonas syringae pv. phaseolicola (strain 1448A / Race 6)) protein is 3-isopropylmalate dehydrogenase.